Consider the following 457-residue polypeptide: Putative ankyrin repeat protein L112 (457 aa).

ANK repeat units follow at residues 62 to 91 (QRIT…NHNP), 104 to 132 (SKDT…ASIN), 133 to 162 (SSSL…EIIN), 193 to 219 (YINE…LDCS), 220 to 249 (ITVD…DPRK), 251 to 279 (KCWA…KPKE), 281 to 309 (NVDA…DTIT), 310 to 339 (RRDW…SQKS), 341 to 368 (NKAL…DFRQ), 400 to 429 (NNNE…DYNP), and 431 to 457 (KDQL…DTLK).

The chain is Putative ankyrin repeat protein L112 from Acanthamoeba polyphaga mimivirus (APMV).